We begin with the raw amino-acid sequence, 426 residues long: MIDPQTLRDHPDLVIASQELRGASVEVVDQAVAADSERRQAITEFEGLRAEQNAHGKLVAKADKADKPRLIAEVQELKARVTAAQERAQQAEAALDEAMRRIPNIVIDGVPAGGEDDWALLREVGEKAAFDFEPRDHLEIGEILDAIDMGRGAKVSGARFHFLKGIGARLEIALMNFGLARALEAGLVPLITPTLVKPEIMAGTGFLGAHADEVYHLDDDDLYLTGTSEVALAGYHADEILDLAAGPIRYAGWSTCYRKEAGSYGKDTRGIIRVHQFQKLEMFSYVDPADAEAEHERLLAMQERMMQDLGLAYRVIDTAAGDLGSSAARKYDVEAWIPTQGAYRELTSTSNCTTFQARRLGTRFRGEDGRTSPVATLNGTLATTRWIVAILETHQRADGSVRVPEALRPYLGGLEVLEPATAKAAR.

Residue 227–229 coordinates L-serine; that stretch reads TSE. ATP-binding positions include 258–260 and valine 274; that span reads RKE. L-serine is bound at residue glutamate 281. 345–348 provides a ligand contact to ATP; it reads ELTS. Position 380 (threonine 380) interacts with L-serine.

It belongs to the class-II aminoacyl-tRNA synthetase family. Type-1 seryl-tRNA synthetase subfamily. In terms of assembly, homodimer. The tRNA molecule binds across the dimer.

It localises to the cytoplasm. It catalyses the reaction tRNA(Ser) + L-serine + ATP = L-seryl-tRNA(Ser) + AMP + diphosphate + H(+). It carries out the reaction tRNA(Sec) + L-serine + ATP = L-seryl-tRNA(Sec) + AMP + diphosphate + H(+). It functions in the pathway aminoacyl-tRNA biosynthesis; selenocysteinyl-tRNA(Sec) biosynthesis; L-seryl-tRNA(Sec) from L-serine and tRNA(Sec): step 1/1. Functionally, catalyzes the attachment of serine to tRNA(Ser). Is also able to aminoacylate tRNA(Sec) with serine, to form the misacylated tRNA L-seryl-tRNA(Sec), which will be further converted into selenocysteinyl-tRNA(Sec). This Clavibacter sepedonicus (Clavibacter michiganensis subsp. sepedonicus) protein is Serine--tRNA ligase.